A 362-amino-acid polypeptide reads, in one-letter code: Transcription factor bHLH133 (362 aa).

One can recognise a bHLH domain in the interval 209–258; the sequence is LQVPSSQSTLKVRKEKLGGRIASLHQLVSPFGKTDTASVLSEAIGYIRFL.

The protein belongs to the bHLH protein family. In terms of assembly, homodimer.

Its subcellular location is the nucleus. The chain is Transcription factor bHLH133 (BHLH133) from Arabidopsis thaliana (Mouse-ear cress).